Reading from the N-terminus, the 255-residue chain is 5'-nucleotidase SurE (255 aa).

Residues Asp-13, Asp-14, Ser-44, and Asn-100 each contribute to the a divalent metal cation site.

Belongs to the SurE nucleotidase family. A divalent metal cation is required as a cofactor.

Its subcellular location is the cytoplasm. It catalyses the reaction a ribonucleoside 5'-phosphate + H2O = a ribonucleoside + phosphate. Its function is as follows. Nucleotidase that shows phosphatase activity on nucleoside 5'-monophosphates. This Bacteroides fragilis (strain ATCC 25285 / DSM 2151 / CCUG 4856 / JCM 11019 / LMG 10263 / NCTC 9343 / Onslow / VPI 2553 / EN-2) protein is 5'-nucleotidase SurE.